We begin with the raw amino-acid sequence, 183 residues long: Phosphopantetheine adenylyltransferase (183 aa).

Residue S8 coordinates substrate. ATP is bound by residues 8 to 9 (SF) and H16. Substrate-binding residues include K40, T72, and R86. Residues 87–89 (GLR), E97, and 122–128 (YSFLSSS) contribute to the ATP site.

The protein belongs to the bacterial CoaD family. As to quaternary structure, homohexamer. It depends on Mg(2+) as a cofactor.

It localises to the cytoplasm. It carries out the reaction (R)-4'-phosphopantetheine + ATP + H(+) = 3'-dephospho-CoA + diphosphate. It functions in the pathway cofactor biosynthesis; coenzyme A biosynthesis; CoA from (R)-pantothenate: step 4/5. Its function is as follows. Reversibly transfers an adenylyl group from ATP to 4'-phosphopantetheine, yielding dephospho-CoA (dPCoA) and pyrophosphate. This Nostoc punctiforme (strain ATCC 29133 / PCC 73102) protein is Phosphopantetheine adenylyltransferase.